The primary structure comprises 503 residues: T-complex protein 11 homolog (503 aa).

Basic and acidic residues predominate over residues 1–22 (MPDVKESVPPKYPGDSEGRSCK). 2 disordered regions span residues 1–42 (MPDV…PPPF) and 254–285 (DLTM…NPEP). Over residues 263–285 (PDTSDSSSVAGPSPNEAANNPEP) the composition is skewed to low complexity. The chain crosses the membrane as a helical span at residues 330–349 (LTVMASVLLVASSFSGSVLF).

It belongs to the TCP11 family. Found in a complex at least composed of MROH2B, PRKACA isoform 2 and TCP11. Interacts with MROH2B. Interacts with PRKACA isoform 2. Isoform 2 and isoform 3 interact with ODF1 (via leucine zipper motif). In terms of processing, constitutively phosphorylated on serine, threonine and tyrosine residues within the head and tail regions of noncapacitated spermatozoa. Phosphorylation on tyrosine residues increases upon sperm capacitation within the acrosomal region in a protein kinase A (PKA)-dependent signaling pathway. Isoform 2 and isoform 3 are expressed in sperm. Isoform 1 is not detected in sperm (at protein level). Testis-specific. Isoform 1, isoform 2 and isoform 3 are expressed in sperm.

Its subcellular location is the membrane. It localises to the cell projection. It is found in the cilium. The protein resides in the flagellum. The protein localises to the cytoplasmic vesicle. Its subcellular location is the secretory vesicle. It localises to the acrosome. In terms of biological role, plays a role in the process of sperm capacitation and acrosome reactions. Probable receptor for the putative fertilization-promoting peptide (FPP) at the sperm membrane that may modulate the activity of the adenylyl cyclase cAMP pathway. The protein is T-complex protein 11 homolog (TCP11) of Homo sapiens (Human).